A 324-amino-acid chain; its full sequence is Beta-ketoacyl-[acyl-carrier-protein] synthase III (324 aa).

Active-site residues include C112 and H251. Residues 252–256 (QANLR) are ACP-binding. Residue N281 is part of the active site.

The protein belongs to the thiolase-like superfamily. FabH family. In terms of assembly, homodimer.

It is found in the cytoplasm. It catalyses the reaction malonyl-[ACP] + acetyl-CoA + H(+) = 3-oxobutanoyl-[ACP] + CO2 + CoA. It functions in the pathway lipid metabolism; fatty acid biosynthesis. Its function is as follows. Catalyzes the condensation reaction of fatty acid synthesis by the addition to an acyl acceptor of two carbons from malonyl-ACP. Catalyzes the first condensation reaction which initiates fatty acid synthesis and may therefore play a role in governing the total rate of fatty acid production. Possesses both acetoacetyl-ACP synthase and acetyl transacylase activities. Its substrate specificity determines the biosynthesis of branched-chain and/or straight-chain of fatty acids. This Clostridium perfringens (strain ATCC 13124 / DSM 756 / JCM 1290 / NCIMB 6125 / NCTC 8237 / Type A) protein is Beta-ketoacyl-[acyl-carrier-protein] synthase III.